We begin with the raw amino-acid sequence, 608 residues long: Protein FAM151A (608 aa).

The helical transmembrane segment at 14–34 (WILAGSVTVTLVLAISLILGL) threads the bilayer. The span at 586-596 (VSSNRPSSRIG) shows a compositional bias: polar residues. Positions 586-608 (VSSNRPSSRIGPSSVEGFPGESR) are disordered.

The protein belongs to the menorin family.

Its subcellular location is the membrane. In Mus musculus (Mouse), this protein is Protein FAM151A (Fam151a).